A 457-amino-acid polypeptide reads, in one-letter code: Fibrinogen C domain-containing protein 1-B (457 aa).

Residues 1–21 form a disordered region; the sequence is MGSDRWKNIRGTPQMEDSVQE. Residues 1–33 lie on the Cytoplasmic side of the membrane; the sequence is MGSDRWKNIRGTPQMEDSVQEKSQRKGCGYILC. Residues 34–54 traverse the membrane as a helical; Signal-anchor for type II membrane protein segment; it reads TVLLSVAVLLAVTVTGAVLFM. At 55–457 the chain is on the extracellular side; the sequence is NQYHAPSTEP…MKIRPQREEN (403 aa). In terms of domain architecture, Fibrinogen C-terminal spans 231 to 454; the sequence is CANGSKPRDC…FTEMKIRPQR (224 aa). Residue Asn233 is glycosylated (N-linked (GlcNAc...) asparagine). Cys240 and Cys269 form a disulfide bridge. Asn336 is a glycosylation site (N-linked (GlcNAc...) asparagine). Ca(2+)-binding residues include Asp389 and Asp391. A disulfide bond links Cys397 and Cys410.

As to quaternary structure, homotetramer; disulfide-linked.

The protein resides in the membrane. Functionally, acetyl group-binding receptor which shows a calcium-dependent binding to acetylated structures such as chitin, some N-acetylated carbohydrates, and amino acids. This Xenopus laevis (African clawed frog) protein is Fibrinogen C domain-containing protein 1-B (fibcd1-b).